Reading from the N-terminus, the 257-residue chain is Short chain dehydrogenase helC (257 aa).

The N-terminal stretch at Met-1 to Ala-22 is a signal peptide. Val-13 contacts NADP(+). N-linked (GlcNAc...) asparagine glycosylation occurs at Asn-46. 2 residues coordinate NADP(+): Asp-60 and Asn-87. N-linked (GlcNAc...) asparagine glycosylation occurs at Asn-110. NADP(+) contacts are provided by Tyr-154, Lys-158, Ile-185, and Thr-187. The Proton acceptor role is filled by Tyr-154. The active-site Lowers pKa of active site Tyr is the Lys-158.

Belongs to the short-chain dehydrogenases/reductases (SDR) family.

Its pathway is mycotoxin biosynthesis. Functionally, short chain dehydrogenase; part of the gene cluster that mediates the biosynthesis of helvolic acid, an antibacterial nortriterpenoid. Protostadienol synthase helA cyclizes (3S)-oxidosqualene to (17Z)-protosta-17(20),24-dien-3-beta-ol (protostadienol). The synthesis of protostadienol is followed by several steps of monooxygenation, dehydrogenation, and acyl transfer to yield the final helvolic acid. Following the cyclization to the tetracyclic protostadienol by helA, cytochrome P450 monooxygenases helB1-mediated and helB2-mediated oxidation at C-4 and C-16, acyltransferase helD2-dependent acetylation of 16-OH, oxidation of C-21 by cytochrome P450 monooxygenase helB4, and short chain dehydrogenase helC-dependent oxidative decarboxylation yield the fusidane skeleton. This intermediate is further modified in three additional steps mediated by the cytochrome P450 monooxygenase helB3, the acyltransferase helD1, and the 3-ketosteroid 1-dehydrogenase helE to give helvolic acid. Compared with the late stages in the biosynthesis of helvolic acid, enzymes involved in the early stage modifications act in a relatively strict order. The hydroxylation of C-16 by helB1 and subsequent acetylation by helD2 should occur before the helB3-mediated oxidation of C-21. C-4 demethylation in fusidane-type antibiotics proceeds in an unusual manner though it is also achieved by oxidative decarboxylation. The methyl group at C-4 beta position is oxidized by helB1 and subsequently removed by the short chain dehydrogenase helC. The protein is Short chain dehydrogenase helC of Aspergillus fumigatus (strain ATCC MYA-4609 / CBS 101355 / FGSC A1100 / Af293) (Neosartorya fumigata).